Consider the following 1132-residue polypeptide: SNF2 domain-containing protein CLASSY 4 (1132 aa).

4 disordered regions span residues 24-104, 224-331, 376-396, and 525-544; these read NKSK…SKSF, LRGE…HHKK, DPVV…PRER, and PSVN…LPNR. Residues 47–54 carry the Nuclear localization signal motif; the sequence is KRRVNMRD. Residues 81–90 are compositionally biased toward basic and acidic residues; it reads EYPEGKRDDE. Over residues 92 to 103 the composition is skewed to polar residues; the sequence is VGSTSGNLQSKS. The segment covering 233-242 has biased composition (low complexity); that stretch reads SDEVVSLSSS. Residues 243-254 show a composition bias toward acidic residues; the sequence is SDDEEDPLEELG. The segment covering 255-269 has biased composition (basic and acidic residues); sequence TDSREEVSGEDRDSG. Composition is skewed to acidic residues over residues 270–282 and 291–309; these read ESDM…DSDS and DSSD…EDEE. 3 stretches are compositionally biased toward basic and acidic residues: residues 310 to 326, 376 to 392, and 525 to 539; these read GGTR…SEKV, DPVV…EHGK, and PSVN…RKGD. The 194-residue stretch at 603-796 folds into the Helicase ATP-binding domain; it reads SVGVKGSGGC…SNVLCLARPA (194 aa). 616–623 serves as a coordination point for ATP; the sequence is HKAGTGKT. Positions 747–750 match the DEAH box motif; it reads DEGH. The Helicase C-terminal domain occupies 934–1087; it reads DFIRISGTVK…ELVFSSTNEK (154 aa).

It belongs to the SNF2/RAD54 helicase family. In terms of assembly, interacts with NRPD1.

It is found in the nucleus. Probable chromatin remodeling factor. In Arabidopsis thaliana (Mouse-ear cress), this protein is SNF2 domain-containing protein CLASSY 4 (CLSY4).